A 300-amino-acid polypeptide reads, in one-letter code: 4-hydroxy-tetrahydrodipicolinate synthase (300 aa).

Pyruvate is bound at residue Thr45. Tyr140 serves as the catalytic Proton donor/acceptor. Lys169 acts as the Schiff-base intermediate with substrate in catalysis. Ile210 contacts pyruvate.

It belongs to the DapA family. Homotetramer; dimer of dimers.

It is found in the cytoplasm. The catalysed reaction is L-aspartate 4-semialdehyde + pyruvate = (2S,4S)-4-hydroxy-2,3,4,5-tetrahydrodipicolinate + H2O + H(+). It functions in the pathway amino-acid biosynthesis; L-lysine biosynthesis via DAP pathway; (S)-tetrahydrodipicolinate from L-aspartate: step 3/4. Its function is as follows. Catalyzes the condensation of (S)-aspartate-beta-semialdehyde [(S)-ASA] and pyruvate to 4-hydroxy-tetrahydrodipicolinate (HTPA). The protein is 4-hydroxy-tetrahydrodipicolinate synthase of Helicobacter pylori (strain Shi470).